Reading from the N-terminus, the 436-residue chain is Xaa-Arg dipeptidase (436 aa).

The protein belongs to the peptidase M20A family.

The catalysed reaction is beta-alanyl-L-lysine + H2O = beta-alanine + L-lysine. It carries out the reaction beta-alanyl-L-ornithine + H2O = beta-alanine + L-ornithine. It catalyses the reaction N(2)-(4-aminobutanoyl)-L-lysine + H2O = 4-aminobutanoate + L-lysine. The enzyme catalyses N(2)-(4-aminobutanoyl)-L-ornithine + H2O = 4-aminobutanoate + L-ornithine. The catalysed reaction is N(2)-(4-aminobutanoyl)-L-arginine + H2O = 4-aminobutanoate + L-arginine. Its function is as follows. Catalyzes the peptide bond hydrolysis in dipeptides having basic amino acids lysine, ornithine or arginine at C-terminus. Postulated to function in a metabolite repair mechanism by eliminating alternate dipeptide by-products formed during carnosine synthesis. This chain is Xaa-Arg dipeptidase, found in Homo sapiens (Human).